A 285-amino-acid chain; its full sequence is Urease accessory protein UreD 1 (285 aa).

This sequence belongs to the UreD family. In terms of assembly, ureD, UreF and UreG form a complex that acts as a GTP-hydrolysis-dependent molecular chaperone, activating the urease apoprotein by helping to assemble the nickel containing metallocenter of UreC. The UreE protein probably delivers the nickel.

The protein resides in the cytoplasm. Its function is as follows. Required for maturation of urease via the functional incorporation of the urease nickel metallocenter. This Pseudomonas syringae pv. syringae (strain B728a) protein is Urease accessory protein UreD 1.